The chain runs to 315 residues: MRLRKYNKSLGWLSLFAGTVLLSGCNSALLDPKGQIGLEQRSLILTAFGLMLIVVIPAILMAVGFAWKYRASNKDAKYSPNWSHSNKVEAVVWTVPILIIIFLAVLTWKTTHALEPSKPLAHDEKPITIEVVSMDWKWFFIYPEQGIATVNEIAFPANTPVYFKVTSNSVMNSFFIPRLGSQIYAMAGMQTRLHLIANEPGTYDGISASYSGPGFSGMKFKAIATPDRAAFDQWVAKAKQSPNTMSDMAAFEKLAAPSEYNQVEYFSNVKPDLFADVINKFMAHGKSMDMTQPEGEHSAHEGMEGMDMSHAESAH.

An N-terminal signal peptide occupies residues 1 to 24 (MRLRKYNKSLGWLSLFAGTVLLSG). Residue Cys25 is the site of N-palmitoyl cysteine attachment. Cys25 carries the S-diacylglycerol cysteine lipid modification. Over 25 to 50 (CNSALLDPKGQIGLEQRSLILTAFGL) the chain is Periplasmic. A helical membrane pass occupies residues 51–68 (MLIVVIPAILMAVGFAWK). At 69–92 (YRASNKDAKYSPNWSHSNKVEAVV) the chain is on the cytoplasmic side. Residues 93-111 (WTVPILIIIFLAVLTWKTT) traverse the membrane as a helical segment. At 112-315 (HALEPSKPLA…MDMSHAESAH (204 aa)) the chain is on the periplasmic side. The interval 288–315 (MDMTQPEGEHSAHEGMEGMDMSHAESAH) is disordered. Residues 294 to 315 (EGEHSAHEGMEGMDMSHAESAH) show a composition bias toward basic and acidic residues.

Belongs to the cytochrome c oxidase subunit 2 family. Heterooctamer of two A chains, two B chains, two C chains and two D chains.

The protein resides in the cell inner membrane. Functionally, cytochrome bo(3) ubiquinol terminal oxidase is the component of the aerobic respiratory chain of E.coli that predominates when cells are grown at high aeration. Has proton pump activity across the membrane in addition to electron transfer, pumping 2 protons/electron. In Escherichia coli O6:H1 (strain CFT073 / ATCC 700928 / UPEC), this protein is Cytochrome bo(3) ubiquinol oxidase subunit 2 (cyoA).